Consider the following 331-residue polypeptide: UPF0324 membrane protein SACOL0411 (331 aa).

The next 11 helical transmembrane spans lie at 9 to 26, 31 to 48, 69 to 88, 93 to 115, 122 to 144, 154 to 176, 183 to 202, 217 to 234, 247 to 269, 273 to 295, and 308 to 330; these read FMIGLSLTFIVALFSFLA, ILDKVGALTIAILIAILY, LLRFAIILYGLKLNIFDIIG, LLAIDVGVVIFSIVMMLFVNKLL, ALLLGVGTGVCGAAAIAAVAPIF, SIGIIALIGTIFSLIYTAIYAIF, YGAWSGVSLHEIAHVVLAGG, LGRVFLLIPLTIVLILIM, ISIPYFLIGFVIMALVNTYVTIP, LNILNTVSTICLLMAMVALGLNV, and LMTIIITSICLSSLAFIVVHWLY.

The protein belongs to the UPF0324 family.

It is found in the cell membrane. The protein is UPF0324 membrane protein SACOL0411 of Staphylococcus aureus (strain COL).